Here is a 2169-residue protein sequence, read N- to C-terminus: MVPLVQPTTPAYRPLPSHLSADTEVRGRGTLVHEAQLNCFYISPGGSNYGSPRPAHANINANAAAGLAPEHIPTPGAALSWQAAIDAGRQAKLMGSAGNTTISTVSSTQRKRQQYGKPKKQSGTTATRPPRALLCLTLKNPIRRACISIVEWKPFEIIILLTIFANCVALAIYIPFPEDDSNATNSNLERVEYLFLIIFTVEAFLKVIAYGLLFHPNAYLRNGWNLLDFIIVVVGLFSAILEQATKADGANALGGKGAGFDVKALRAFRVLRPLRLVSGVPSLQVVLNSIIKAMVPLLHTALLVLFVIIIYAIIGLELFMGKMHKTCYNQEGITDVPAEEDPSPCALESGHGRQCQNGTVCKPGWDGPKHGITNFDNFAFAMLTVFQCITMEGWTDVLYWMQDAMGYELPWVYFVSLVIFGSFFVLNLVLGVLSGEFSKEREKAKARGDFQKLREKQQLEEDLKGYLDWITQAEDIDPENEDEGVDEEKPRNMSMPTSETESVNTENVAGGDIEGENCGARLAHRISKSKFSRYWRRWNRFCRRKCRAAVKSNVFYWLVIFLVFLNTLTIASEHYNQPHWLTEVQDTANKALLALFTAEMLLKMYSLGLQAYFVSLFNRLDCFIVCGGILETILVETKIMSPLGISVLRCVRLLRIFKITRYWNSLSNLVASLLNSVRSIASLLLLLFLFIIIFSLLGMQLFGGKFNFDEMRTRRSTFDNFPQSLLTVFQILTGEDWNSVMYDGIMAYGGPSFPGMLVCIYFIILFICGNYILLNVFLAIAVDNLADAESLTSAQKEEEEEKERKKLARTASPEKKQEVVEKPAVEETKEEKIELKSITADGESPPTTKINMDDLQPNENEDKSPYPNPDAAGEEDEEEPEMPVGPRPRPLSELHLKEKAVPMPEASAFFIFSPNNRFRLQCHRIVNDTIFTNLILFFILLSSISLAAEDPVQHTSFRNHILFYFDIVFTTIFTIEIALKMTAYGAFLHKGSFCRNYFNILDLLVVSVSLISFGIQSSAINVVKILRVLRVLRPLRAINRAKGLKHVVQCVFVAIRTIGNIVIVTTLLQFMFACIGVQLFKGKLYTCSDSSKQTEAECKGNYITYKDGEVDQPIIQPRSWENSKFDFDNVLAAMMALFTVSTFEGWPELLYRSIDSHTEDKGPIYNYRVEISIFFIIYIIIIAFFMMNIFVGFVIVTFQEQGEQEYKNCELDKNQRQCVEYALKARPLRRYIPKNQHQYKVWYVVNSTYFEYLMFVLILLNTICLAMQHYGQSCLFKIAMNILNMLFTGLFTVEMILKLIAFKPKHYFCDAWNTFDALIVVGSIVDIAITEVNPAEHTQCSPSMNAEENSRISITFFRLFRVMRLVKLLSRGEGIRTLLWTFIKSFQALPYVALLIVMLFFIYAVIGMQVFGKIALNDTTEINRNNNFQTFPQAVLLLFRCATGEAWQDIMLACMPGKKCAPESDPSNSTEGETPCGSSFAVFYFISFYMLCAFLIINLFVAVVMDNFDYLTRDWSILGPHHLDEFKRIWAEYDPEAKGRIKHLDVVTLLRRIQPPLGFGKLCPHRVACKRLVSMNMPLNSDGTAMFNATLFALVRTALRIKTEGNLEQANEELRAIIKKIWKRTSMKLLDQVVPPAGDDEVTVGKFYATFLIQEYFRKFKKRKEQGLVGKPSQRNALSLQAGLRTLHDIGPEIRRAISGDLTAEEELDKAMKEAVSAASEDDIFGRAGGLFGNHVSYYQSDSRSTFPQTFTTQRPLHINKAGNNQGDTESPSHEKLVDSTFTPSSYSSTGSNANINNANNTALGRFPHPAGYPSTVSTVEGHRPPSSPATWAQEATRKLGAMRCHSRESQIAVVCQEEPSQDKTYDVELNKDAEYCSEPSLLSTEMLSYKDDENRQLTPPEEDKGDTRPSPKKGFLRSASLGRRASFHLECLKRQKNHGGDISQKTVLPLHLVHHQALAVAGLSPLLQRSHSPTAIPRPCATPPATPGSRGWPPKPIPTLRLEGAESCEKLNSSFPSIHCSSWSEEPSPCGGGSSAARRARPVSLMVPSQAGAPGRQFHGSASSLAEAVLISEGLGQFAQDPKFIEVTTQELADACDMTIGEMENAADNILSGGAPQSPNGTLLPFVNCRDPGQDRAGGDEDEGCACALGRGWSEEELADSRVHVRSL.

The Cytoplasmic segment spans residues 1 to 153; the sequence is MVPLVQPTTP…RACISIVEWK (153 aa). Residues 76-97 are calmodulin-binding; the sequence is GAALSWQAAIDAGRQAKLMGSA. Residues 98-108 show a composition bias toward polar residues; that stretch reads GNTTISTVSST. Residues 98–127 are disordered; it reads GNTTISTVSSTQRKRQQYGKPKKQSGTTAT. Residues 109-120 are compositionally biased toward basic residues; it reads QRKRQQYGKPKK. One copy of the I repeat lies at 140–437; that stretch reads NPIRRACISI…LVLGVLSGEF (298 aa). Residues 154–172 form a helical membrane-spanning segment; sequence PFEIIILLTIFANCVALAI. Residues 173 to 187 lie on the Extracellular side of the membrane; sequence YIPFPEDDSNATNSN. A glycan (N-linked (GlcNAc...) asparagine) is linked at Asn-182. The chain crosses the membrane as a helical span at residues 188-208; it reads LERVEYLFLIIFTVEAFLKVI. The Cytoplasmic portion of the chain corresponds to 209–217; it reads AYGLLFHPN. A helical membrane pass occupies residues 218–238; that stretch reads AYLRNGWNLLDFIIVVVGLFS. Over 239 to 261 the chain is Extracellular; that stretch reads AILEQATKADGANALGGKGAGFD. Residues 262 to 280 traverse the membrane as a helical segment; that stretch reads VKALRAFRVLRPLRLVSGV. Over 281-297 the chain is Cytoplasmic; sequence PSLQVVLNSIIKAMVPL. The chain crosses the membrane as a helical span at residues 298 to 319; that stretch reads LHTALLVLFVIIIYAIIGLELF. Residues 320–379 lie on the Extracellular side of the membrane; the sequence is MGKMHKTCYNQEGITDVPAEEDPSPCALESGHGRQCQNGTVCKPGWDGPKHGITNFDNFA. A disulfide bridge connects residues Cys-345 and Cys-361. An N-linked (GlcNAc...) asparagine glycan is attached at Asn-357. Positions 380-401 form an intramembrane region, pore-forming; sequence FAMLTVFQCITMEGWTDVLYWM. The short motif at 390 to 393 is the Selectivity filter of repeat I element; sequence TMEG. Glu-392 contributes to the Ca(2+) binding site. The Extracellular segment spans residues 402–409; that stretch reads QDAMGYEL. The chain crosses the membrane as a helical span at residues 410–430; it reads PWVYFVSLVIFGSFFVLNLVL. Over 431 to 553 the chain is Cytoplasmic; that stretch reads GVLSGEFSKE…RKCRAAVKSN (123 aa). The interval 457-474 is AID/alpha-interaction domain; mediates interaction with the beta subunit; sequence QQLEEDLKGYLDWITQAE. The disordered stretch occupies residues 478 to 510; it reads PENEDEGVDEEKPRNMSMPTSETESVNTENVAG. The span at 494–507 shows a compositional bias: polar residues; sequence SMPTSETESVNTEN. Ser-498 is modified (phosphoserine). A Phosphothreonine modification is found at Thr-505. Residues 539-785 form an II repeat; the sequence is NRFCRRKCRA…VFLAIAVDNL (247 aa). The helical transmembrane segment at 554–572 threads the bilayer; that stretch reads VFYWLVIFLVFLNTLTIAS. The Extracellular portion of the chain corresponds to 573–583; sequence EHYNQPHWLTE. A helical membrane pass occupies residues 584-604; that stretch reads VQDTANKALLALFTAEMLLKM. The Cytoplasmic portion of the chain corresponds to 605–615; sequence YSLGLQAYFVS. Residues 616-635 form a helical membrane-spanning segment; that stretch reads LFNRLDCFIVCGGILETILV. Residues 636–644 lie on the Extracellular side of the membrane; that stretch reads ETKIMSPLG. The helical transmembrane segment at 645 to 663 threads the bilayer; sequence ISVLRCVRLLRIFKITRYW. Residues 664 to 682 are Cytoplasmic-facing; it reads NSLSNLVASLLNSVRSIAS. The helical transmembrane segment at 683–702 threads the bilayer; that stretch reads LLLLLFLFIIIFSLLGMQLF. Residues 703 to 722 lie on the Extracellular side of the membrane; the sequence is GGKFNFDEMRTRRSTFDNFP. Positions 723–744 form an intramembrane region, pore-forming; sequence QSLLTVFQILTGEDWNSVMYDG. Positions 733–736 match the Selectivity filter of repeat II motif; sequence TGED. Glu-735 is a binding site for Ca(2+). Topologically, residues 745 to 754 are extracellular; the sequence is IMAYGGPSFP. Residues 755 to 774 form a helical membrane-spanning segment; the sequence is GMLVCIYFIILFICGNYILL. At 775–929 the chain is on the cytoplasmic side; it reads NVFLAIAVDN…LQCHRIVNDT (155 aa). The tract at residues 793–890 is disordered; it reads SAQKEEEEEK…EMPVGPRPRP (98 aa). Over residues 812–835 the composition is skewed to basic and acidic residues; that stretch reads SPEKKQEVVEKPAVEETKEEKIEL. Phosphoserine occurs at positions 837 and 844. The tract at residues 858-905 is interaction with STAC2; it reads NENEDKSPYPNPDAAGEEDEEEPEMPVGPRPRPLSELHLKEKAVPMPE. Over residues 872–881 the composition is skewed to acidic residues; the sequence is AGEEDEEEPE. The stretch at 916 to 1198 is one III repeat; it reads NRFRLQCHRI…IFVGFVIVTF (283 aa). The chain crosses the membrane as a helical span at residues 930 to 948; that stretch reads IFTNLILFFILLSSISLAA. Over 949-960 the chain is Extracellular; sequence EDPVQHTSFRNH. Residues 961–980 form a helical membrane-spanning segment; that stretch reads ILFYFDIVFTTIFTIEIALK. Over 981–996 the chain is Cytoplasmic; sequence MTAYGAFLHKGSFCRN. A helical transmembrane segment spans residues 997-1015; that stretch reads YFNILDLLVVSVSLISFGI. Residues 1016 to 1022 are Extracellular-facing; that stretch reads QSSAINV. The helical transmembrane segment at 1023–1041 threads the bilayer; sequence VKILRVLRVLRPLRAINRA. The Cytoplasmic segment spans residues 1042–1060; that stretch reads KGLKHVVQCVFVAIRTIGN. The helical transmembrane segment at 1061–1080 threads the bilayer; that stretch reads IVIVTTLLQFMFACIGVQLF. The Extracellular portion of the chain corresponds to 1081–1130; that stretch reads KGKLYTCSDSSKQTEAECKGNYITYKDGEVDQPIIQPRSWENSKFDFDNV. The cysteines at positions 1087 and 1098 are disulfide-linked. The interval 1118–1207 is dihydropyridine binding; it reads RSWENSKFDF…FQEQGEQEYK (90 aa). The segment at residues 1131 to 1151 is an intramembrane region (pore-forming); that stretch reads LAAMMALFTVSTFEGWPELLY. The Selectivity filter of repeat III signature appears at 1142-1145; the sequence is TFEG. Glu-1144 is a binding site for Ca(2+). At 1152–1168 the chain is on the extracellular side; the sequence is RSIDSHTEDKGPIYNYR. Residues 1169-1190 traverse the membrane as a helical segment; the sequence is VEISIFFIIYIIIIAFFMMNIF. The Cytoplasmic portion of the chain corresponds to 1191–1248; that stretch reads VGFVIVTFQEQGEQEYKNCELDKNQRQCVEYALKARPLRRYIPKNQHQYKVWYVVNST. The stretch at 1235 to 1508 is one IV repeat; it reads NQHQYKVWYV…LFVAVVMDNF (274 aa). The chain crosses the membrane as a helical span at residues 1249 to 1270; the sequence is YFEYLMFVLILLNTICLAMQHY. The Extracellular portion of the chain corresponds to 1271 to 1278; that stretch reads GQSCLFKI. Residues 1279–1300 traverse the membrane as a helical segment; it reads AMNILNMLFTGLFTVEMILKLI. Topologically, residues 1301-1310 are cytoplasmic; the sequence is AFKPKHYFCD. A helical transmembrane segment spans residues 1311-1330; that stretch reads AWNTFDALIVVGSIVDIAIT. Topologically, residues 1331 to 1353 are extracellular; that stretch reads EVNPAEHTQCSPSMNAEENSRIS. Residues 1354-1372 form a helical membrane-spanning segment; sequence ITFFRLFRVMRLVKLLSRG. The Cytoplasmic segment spans residues 1373–1390; it reads EGIRTLLWTFIKSFQALP. The chain crosses the membrane as a helical span at residues 1391 to 1411; that stretch reads YVALLIVMLFFIYAVIGMQVF. The Extracellular portion of the chain corresponds to 1412–1433; sequence GKIALNDTTEINRNNNFQTFPQ. N-linked (GlcNAc...) asparagine glycosylation is present at Asn-1417. The segment at residues 1434–1452 is an intramembrane region (pore-forming); it reads AVLLLFRCATGEAWQDIML. Positions 1443–1446 match the Selectivity filter of repeat IV motif; sequence TGEA. The Extracellular segment spans residues 1453–1480; sequence ACMPGKKCAPESDPSNSTEGETPCGSSF. The tract at residues 1459–1527 is dihydropyridine binding; sequence KCAPESDPSN…LGPHHLDEFK (69 aa). A disulfide bond links Cys-1460 and Cys-1476. An N-linked (GlcNAc...) asparagine glycan is attached at Asn-1468. The interval 1473–1515 is phenylalkylamine binding; that stretch reads ETPCGSSFAVFYFISFYMLCAFLIINLFVAVVMDNFDYLTRDW. A helical membrane pass occupies residues 1481–1505; sequence AVFYFISFYMLCAFLIINLFVAVVM. At 1506-2169 the chain is on the cytoplasmic side; sequence DNFDYLTRDW…ADSRVHVRSL (664 aa). The interval 1640–1667 is important for interaction with STAC1, STAC2 and STAC3; it reads DEVTVGKFYATFLIQEYFRKFKKRKEQG. Residues 1646 to 1666 are calmodulin-binding IQ region; the sequence is KFYATFLIQEYFRKFKKRKEQ. The tract at residues 1680 to 1699 is important for localization in at the junctional membrane; the sequence is LQAGLRTLHDIGPEIRRAIS. Phosphoserine occurs at positions 1699 and 1720. Disordered regions lie at residues 1761–1793 and 1894–1920; these read KAGN…TGSN and ENRQ…LRSA. A compositionally biased stretch (polar residues) spans 1780-1792; sequence STFTPSSYSSTGS. Residues 1894–1910 are compositionally biased toward basic and acidic residues; that stretch reads ENRQLTPPEEDKGDTRP. Ser-1927 carries the phosphoserine modification.

Belongs to the calcium channel alpha-1 subunit (TC 1.A.1.11) family. CACNA1C subfamily. As to quaternary structure, component of a calcium channel complex consisting of a pore-forming alpha subunit (CACNA1C) and ancillary beta, gamma and delta subunits. The channel complex contains alpha, beta, gamma and delta subunits in a 1:1:1:1 ratio, i.e. it contains only one of each type of subunit. CACNA1C channel activity is modulated by ancillary subunits, such as CACNB1, CACNB2, CACNB3, CACNA2D1 and CACNA2D4. Interacts with CACNB1. Interacts with CACNB2. Identified in a complex with CACNA2D4 and CACNB3. Interacts with CACNB3. Interacts with CACNA2D1. Interacts with CACNA2D4. Interacts with the gamma subunits CACNG4, CACNG6, CACNG7 and CACNG8. Interacts with CALM1. Interacts (via the N-terminus and the C-terminal C and IQ motifs) with CABP1; this inhibits Ca(2+)-dependent channel inactivation. The binding via the C motif is calcium independent whereas the binding via IQ requires the presence of calcium and is mutually exclusive with calmodulin binding. The binding to the cytoplasmic N-terminal domain is calcium independent but is essential for the channel modulation. Interacts (via C-terminal CDB motif) with CABP5; in a calcium-dependent manner. Interacts with CIB1; the interaction increases upon cardiomyocytes hypertrophy. Interacts with STAC2 and STAC3; this inhibits channel inactivation. In terms of processing, phosphorylation by PKA at Ser-1927 activates the channel. Elevated levels of blood glucose lead to increased phosphorylation by PKA. In terms of tissue distribution, expressed in heart. Expressed in uterus.

It localises to the cell membrane. It is found in the sarcolemma. The protein localises to the perikaryon. Its subcellular location is the postsynaptic density membrane. The protein resides in the cell projection. It localises to the dendrite. It is found in the T-tubule. The enzyme catalyses Ca(2+)(in) = Ca(2+)(out). Inhibited by dihydropyridines (DHP), such as isradipine. Inhibited by nifedipine. Channel activity is regulated by Ca(2+) and calmodulin. Binding of STAC1, STAC2 or STAC3 to a region that overlaps with the calmodulin binding site inhibits channel inactivation by Ca(2+) and calmodulin. Binding of calmodulin or CABP1 at the same regulatory sites results in opposite effects on the channel function. Shear stress and pressure increases calcium channel activity. Functionally, pore-forming, alpha-1C subunit of the voltage-gated calcium channel that gives rise to L-type calcium currents. Mediates influx of calcium ions into the cytoplasm, and thereby triggers calcium release from the sarcoplasm. Plays an important role in excitation-contraction coupling in the heart. Required for normal heart development and normal regulation of heart rhythm. Required for normal contraction of smooth muscle cells in blood vessels and in the intestine. Essential for normal blood pressure regulation via its role in the contraction of arterial smooth muscle cells. Long-lasting (L-type) calcium channels belong to the 'high-voltage activated' (HVA) group. The polypeptide is Voltage-dependent L-type calcium channel subunit alpha-1C (CACNA1C) (Cavia porcellus (Guinea pig)).